Consider the following 351-residue polypeptide: Auxin-responsive protein IAA27 (351 aa).

The disordered stretch occupies residues 1 to 37 (MMNLISFETPPLGRRSQDGGSSSSSITAATTTTNKAK). Positions 21–34 (SSSSSITAATTTTN) are enriched in low complexity. The PB1 domain occupies 233 to 327 (NMFAKVHMDG…SAKRLYIAKN (95 aa)).

Belongs to the Aux/IAA family. As to quaternary structure, homodimers and heterodimers. In terms of tissue distribution, expressed in roots and seedlings.

Its subcellular location is the nucleus. Aux/IAA proteins are short-lived transcriptional factors that function as repressors of early auxin response genes at low auxin concentrations. In Oryza sativa subsp. japonica (Rice), this protein is Auxin-responsive protein IAA27 (IAA27).